The chain runs to 57 residues: Conotoxin Cal6.34 (57 aa).

A signal peptide spans 1-22 (MKLTCVLIVAVLILTACQVIAA). 3 disulfide bridges follow: cysteine 26-cysteine 37, cysteine 29-cysteine 43, and cysteine 36-cysteine 54.

This sequence belongs to the conotoxin O1 superfamily. Expressed by the venom duct.

Its subcellular location is the secreted. In terms of biological role, probable neurotoxin. The polypeptide is Conotoxin Cal6.34 (Californiconus californicus (California cone)).